The chain runs to 405 residues: Protein PAG1 (405 aa).

Residues 1-50 (MVSLIILFRLTFAIANRVRTLMKVLVIVSFFVLTGSASADSGALSLSGAA) form the signal peptide. Residues Asn55, Asn104, Asn256, and Asn351 are each glycosylated (N-linked (GlcNAc...) asparagine). Ala391 carries GPI-anchor amidated alanine lipidation. The propeptide at 392-405 (DSLRRTLALLFLLF) is removed in mature form.

It is found in the cell membrane. This chain is Protein PAG1 (PAG1), found in Trypanosoma brucei brucei.